Here is a 60-residue protein sequence, read N- to C-terminus: Homeobox protein engrailed-like B (60 aa).

A DNA-binding region (homeobox) is located at residues 1-41 (VEQLQRLKSEFGASRYLTEARRQALAQELRLNEAQIKIWFQ).

Belongs to the engrailed homeobox family.

Its subcellular location is the nucleus. The chain is Homeobox protein engrailed-like B from Myxine glutinosa (Atlantic hagfish).